The chain runs to 97 residues: Large ribosomal subunit protein bL27 (97 aa).

The propeptide occupies 1–12; that stretch reads MLNLNLANLQFM. A disordered region spans residues 15 to 37; that stretch reads KKGGGSTSNGRDSQAKRLGAKAA.

Belongs to the bacterial ribosomal protein bL27 family. Post-translationally, the N-terminus is cleaved by ribosomal processing cysteine protease Prp.

The sequence is that of Large ribosomal subunit protein bL27 from Streptococcus suis (strain 98HAH33).